The primary structure comprises 205 residues: Probable GTP-binding protein EngB (205 aa).

One can recognise an EngB-type G domain in the interval 8–195; it reads RDAEVVLIGR…NEAVRHHLHE (188 aa). Residues 16–23, 41–45, 60–63, 140–143, and 175–177 each bind GTP; these read GRSNVGKS, GVTRS, DLPG, NKMD, and ISA. Residues serine 23 and threonine 43 each coordinate Mg(2+).

The protein belongs to the TRAFAC class TrmE-Era-EngA-EngB-Septin-like GTPase superfamily. EngB GTPase family. The cofactor is Mg(2+).

Functionally, necessary for normal cell division and for the maintenance of normal septation. This is Probable GTP-binding protein EngB from Haloarcula marismortui (strain ATCC 43049 / DSM 3752 / JCM 8966 / VKM B-1809) (Halobacterium marismortui).